We begin with the raw amino-acid sequence, 264 residues long: Thiazole synthase (264 aa).

Lys104 (schiff-base intermediate with DXP) is an active-site residue. Residues Gly165, 191 to 192, and 213 to 214 each bind 1-deoxy-D-xylulose 5-phosphate; these read AG and NT.

It belongs to the ThiG family. Homotetramer. Forms heterodimers with either ThiH or ThiS.

It localises to the cytoplasm. The catalysed reaction is [ThiS sulfur-carrier protein]-C-terminal-Gly-aminoethanethioate + 2-iminoacetate + 1-deoxy-D-xylulose 5-phosphate = [ThiS sulfur-carrier protein]-C-terminal Gly-Gly + 2-[(2R,5Z)-2-carboxy-4-methylthiazol-5(2H)-ylidene]ethyl phosphate + 2 H2O + H(+). It participates in cofactor biosynthesis; thiamine diphosphate biosynthesis. In terms of biological role, catalyzes the rearrangement of 1-deoxy-D-xylulose 5-phosphate (DXP) to produce the thiazole phosphate moiety of thiamine. Sulfur is provided by the thiocarboxylate moiety of the carrier protein ThiS. In vitro, sulfur can be provided by H(2)S. In Oleidesulfovibrio alaskensis (strain ATCC BAA-1058 / DSM 17464 / G20) (Desulfovibrio alaskensis), this protein is Thiazole synthase.